Consider the following 798-residue polypeptide: Penicillin-binding protein 1A (798 aa).

At 1–9 the chain is on the cytoplasmic side; that stretch reads MIKKILTTC. Residues 10–30 form a helical; Signal-anchor for type II membrane protein membrane-spanning segment; the sequence is FGLVFGFCVFGVGLVAIAILV. Residues 31–798 are Periplasmic-facing; sequence TYPKLPSLDS…SKQQQLDSLF (768 aa). The tract at residues 50-218 is transglycosylase; the sequence is LTIYSADGEV…SAYNPIVNPE (169 aa). Glu-88 (proton donor; for transglycosylase activity) is an active-site residue. Positions 378–700 are transpeptidase; that stretch reads RRALGFAARA…GTIAVPVWVD (323 aa). Ser-461 functions as the Acyl-ester intermediate; for transpeptidase activity in the catalytic mechanism. Residues 738 to 798 form a disordered region; that stretch reads GLTLDNSGIA…SKQQQLDSLF (61 aa). Residues 768 to 777 are compositionally biased toward basic and acidic residues; the sequence is AADDEVRQDM. Residues 783-798 show a composition bias toward polar residues; sequence LPSNTGSKQQQLDSLF.

In the N-terminal section; belongs to the glycosyltransferase 51 family. This sequence in the C-terminal section; belongs to the transpeptidase family.

Its subcellular location is the cell inner membrane. It catalyses the reaction [GlcNAc-(1-&gt;4)-Mur2Ac(oyl-L-Ala-gamma-D-Glu-L-Lys-D-Ala-D-Ala)](n)-di-trans,octa-cis-undecaprenyl diphosphate + beta-D-GlcNAc-(1-&gt;4)-Mur2Ac(oyl-L-Ala-gamma-D-Glu-L-Lys-D-Ala-D-Ala)-di-trans,octa-cis-undecaprenyl diphosphate = [GlcNAc-(1-&gt;4)-Mur2Ac(oyl-L-Ala-gamma-D-Glu-L-Lys-D-Ala-D-Ala)](n+1)-di-trans,octa-cis-undecaprenyl diphosphate + di-trans,octa-cis-undecaprenyl diphosphate + H(+). It carries out the reaction Preferential cleavage: (Ac)2-L-Lys-D-Ala-|-D-Ala. Also transpeptidation of peptidyl-alanyl moieties that are N-acyl substituents of D-alanine.. It functions in the pathway cell wall biogenesis; peptidoglycan biosynthesis. Its function is as follows. Cell wall formation. Synthesis of cross-linked peptidoglycan from the lipid intermediates. The enzyme has a penicillin-insensitive transglycosylase N-terminal domain (formation of linear glycan strands) and a penicillin-sensitive transpeptidase C-terminal domain (cross-linking of the peptide subunits). This Neisseria meningitidis serogroup A / serotype 4A (strain DSM 15465 / Z2491) protein is Penicillin-binding protein 1A (mrcA).